A 204-amino-acid polypeptide reads, in one-letter code: Probable 5-formyltetrahydrofolate cyclo-ligase (204 aa).

5–9 (KNQLR) contacts ATP. Substrate is bound by residues Glu-57, Trp-102, and 140–144 (HGKGY). ATP is bound by residues 139–146 (GHGKGYYD) and Asp-188.

This sequence belongs to the 5-formyltetrahydrofolate cyclo-ligase family.

It catalyses the reaction (6S)-5-formyl-5,6,7,8-tetrahydrofolate + ATP = (6R)-5,10-methenyltetrahydrofolate + ADP + phosphate. The chain is Probable 5-formyltetrahydrofolate cyclo-ligase from Schizosaccharomyces pombe (strain 972 / ATCC 24843) (Fission yeast).